A 960-amino-acid polypeptide reads, in one-letter code: MTTTVEDNREVLEAVLKEAVDLENVPIEEVFENLRCSKEGLTTQAADERLALFGHNKLEEKKESKFLKFLGFMWNPLSWVMEAAAIMAIALANGGGKPPDWQDFVGIITLLVINSTISFIEENNAGNAAAALMARLAPKAKVLRDGRWGEQDAAILVPGDIISIKLGDIVPADARLLEGDPLKIDQSALTGESLPVTKSSGDGVYSGSTCKQGEIEAVVIATGVHTFFGKAAHLVDTTNQIGHFQQVLTAIGNFCICSIAVGMLIEIVVMYPIQHRAYRPGIDNLLVLLIGGIPIAMPTVLSVTMAIGSHRLSQQGAITKRMTAIEEMAGMDVLCSDKTGTLTLNKLTVDKNLIEVFMKGVDADTVVLMAARASRLENQDAIDAAIVGMLADPKDARAGIQEVHFLPFNPTDKRTALTYIDNEGNTHRVSKGAPEQILNLAHNKSEIERRVHAVIDKFAERGLRSLAVAYQDVPEGRKDSAGGPWQFVGLMPLFDPPRHDSAETIRRALNLGVSVKMITGDQLAIGKETGRRLGMGTNMYPSSALLGQNKDESIVALPVDELIEKADGFAGVFPEHKYEIVKRLQARKHICGMTGDGVNDAPALKKADIGIAVADATDAARSASDIVLTEPGLSVIISAVLTSRAIFQRMKNYTIYAVSITIRIVLGFMLLALIWQFDFPPFMVLIIAILNDGTIMTISKDRVKPSPLPDSWKLSEIFATGVVFGSYMAMMTVIFFWVSYKTDFFPRTFGVATLEKTAHDDFRKLASAIYLQVSIISQALIFVTRSRSWSFVERPGIFLMIAFILAQLVATLIAVYANWSFAAIEGIGWGWAGVIWLYNIIFYIPLDFIKFFIRYALSGRAWDLVIEQRVAFTRQKDFGKEQRELQWAHAQRTLHGLQAPDTKMFTDRTHVSELNQMAEEAKRRAEIARLRELHTLKGHVESVVRLKGLDIETIQQAYTV.

Over 1–69 the chain is Cytoplasmic; the sequence is MTTTVEDNRE…EKKESKFLKF (69 aa). Residues 70–89 form a helical membrane-spanning segment; sequence LGFMWNPLSWVMEAAAIMAI. Topologically, residues 90–101 are extracellular; that stretch reads ALANGGGKPPDW. A helical transmembrane segment spans residues 102–122; that stretch reads QDFVGIITLLVINSTISFIEE. Residues 123–251 are Cytoplasmic-facing; the sequence is NNAGNAAAAL…GHFQQVLTAI (129 aa). The helical transmembrane segment at 252–272 threads the bilayer; sequence GNFCICSIAVGMLIEIVVMYP. Residues 273 to 281 lie on the Extracellular side of the membrane; it reads IQHRAYRPG. Residues 282–299 form a helical membrane-spanning segment; that stretch reads IDNLLVLLIGGIPIAMPT. Residues 300–651 are Cytoplasmic-facing; that stretch reads VLSVTMAIGS…TSRAIFQRMK (352 aa). D337 (4-aspartylphosphate intermediate) is an active-site residue. Mg(2+)-binding residues include D596 and D600. Residues 652-673 traverse the membrane as a helical segment; sequence NYTIYAVSITIRIVLGFMLLAL. At 674–678 the chain is on the extracellular side; that stretch reads IWQFD. Residues 679–701 traverse the membrane as a helical segment; it reads FPPFMVLIIAILNDGTIMTISKD. Residues 702-717 are Cytoplasmic-facing; that stretch reads RVKPSPLPDSWKLSEI. Residues 718 to 738 form a helical membrane-spanning segment; it reads FATGVVFGSYMAMMTVIFFWV. Topologically, residues 739 to 763 are extracellular; that stretch reads SYKTDFFPRTFGVATLEKTAHDDFR. The helical transmembrane segment at 764 to 784 threads the bilayer; the sequence is KLASAIYLQVSIISQALIFVT. Residues 785–796 lie on the Cytoplasmic side of the membrane; the sequence is RSRSWSFVERPG. The chain crosses the membrane as a helical span at residues 797–817; it reads IFLMIAFILAQLVATLIAVYA. Residues 818 to 825 are Extracellular-facing; sequence NWSFAAIE. Residues 826 to 846 traverse the membrane as a helical segment; sequence GIGWGWAGVIWLYNIIFYIPL. Over 847–960 the chain is Cytoplasmic; that stretch reads DFIKFFIRYA…IETIQQAYTV (114 aa). Residue T893 is modified to Phosphothreonine. S942 is subject to Phosphoserine. The segment at 958-960 is interaction with 14-3-3 proteins; sequence YTV. Position 959 is a phosphothreonine (T959).

The protein belongs to the cation transport ATPase (P-type) (TC 3.A.3) family. Type IIIA subfamily. Binds to 14-3-3 proteins. The binding is induced by phosphorylation of Thr-959. Binding to 14-3-3 proteins activates the H(+)-ATPase. Expressed in guard cells and roots.

The protein localises to the cell membrane. The enzyme catalyses ATP + H2O + H(+)(in) = ADP + phosphate + 2 H(+)(out). Its function is as follows. The plasma membrane H(+) ATPase of plants and fungi generates a proton gradient that drives the active transport of nutrients by H(+)-symport. The resulting external acidification and/or internal alkinization may mediate growth responses. This Arabidopsis thaliana (Mouse-ear cress) protein is ATPase 4, plasma membrane-type (AHA4).